The primary structure comprises 884 residues: E3 ubiquitin-protein ligase BRE1-like 1 (884 aa).

Positions 1 to 37 are disordered; it reads MGSTGEPDRKRRLSSSVAPGGGAPVSPAKRLAVAPTS. Positions 49–86 form a coiled coil; it reads YKNQKLSEQLEAHKFEYRALENKFAGLKEKQRTHNETL. Residues 107–127 are disordered; the sequence is KSGSPNSSPGSGHNNVQKDGT. Residues 108–121 show a composition bias toward low complexity; that stretch reads SGSPNSSPGSGHNN. Coiled-coil stretches lie at residues 216–541, 580–663, 696–762, and 789–827; these read LNNV…ELKL, SKLE…LQQI, RNLQ…QSLD, and KKRI…KEYR. Residues 832–871 form an RING-type zinc finger; sequence CGICHDRQKEVVITKCYHLFCNQCIQKSLGNRQRRCPSCS.

It belongs to the BRE1 family. Interacts with SKIPA. Interacts with HUB2.

It is found in the nucleus. It catalyses the reaction S-ubiquitinyl-[E2 ubiquitin-conjugating enzyme]-L-cysteine + [acceptor protein]-L-lysine = [E2 ubiquitin-conjugating enzyme]-L-cysteine + N(6)-ubiquitinyl-[acceptor protein]-L-lysine.. Its pathway is protein modification; protein ubiquitination. E3 ubiquitin-protein ligase that monoubiquitinates H2B to form H2BK143ub1. H2BK143ub1 gives a specific tag for epigenetic transcriptional activation and is a prerequisite for H3 Lys-4 methylation (H3K4me). It thereby plays a central role in histone code and gene regulation. H2B monoubiquitination (H2BK143ub1), mediated by HUB1, modulates transcriptional regulation of anther development, likely by promoting histone H3K4 dimethylation (H3K4me2) in the chromatin of the key tapetum degradation-related genes C4, CP1 and UDT1. In Oryza sativa subsp. japonica (Rice), this protein is E3 ubiquitin-protein ligase BRE1-like 1.